Here is a 523-residue protein sequence, read N- to C-terminus: Signal peptide peptidase-like 3 (523 aa).

A signal peptide spans 1-35 (MAFPAPSSSSPRRRGRGLAYLLVSVLLLASRVPGA). Residues 36–207 (AGADSEFEDG…EKPSFDGAIP (172 aa)) are Lumenal-facing. Positions 110 to 182 (SAPLASSIAV…SQSAGRKILS (73 aa)) constitute a PA domain. N159 carries an N-linked (GlcNAc...) asparagine glycan. A helical membrane pass occupies residues 208-228 (FLWLMAVGSVACASVWSFVVV). Residues 229-254 (GDEDKNAPTLGGEEAADSEIVELQTK) are Cytoplasmic-facing. A helical membrane pass occupies residues 255–272 (TALVFIVTASLVLLFLFF). At 273–275 (FKS) the chain is on the lumenal side. A helical membrane pass occupies residues 276–298 (TWSAWLLVVLFCLSGLQGLHYVA). Residues 299–321 (STLIVRTCDRCREAKVALPVLGN) are Cytoplasmic-facing. A helical transmembrane segment spans residues 322–342 (VTVVTLVILPLALIFVVVWAV). The Lumenal segment spans residues 343-347 (HQNSP). Residues 348–368 (FAWVGQDLMGICMMILVLQVV) traverse the membrane as a helical segment. At 369–377 (HLPNIKVAT) the chain is on the cytoplasmic side. A helical transmembrane segment spans residues 378 to 398 (ALLVSAFMYDIFWVFISPFIF). D387 is a catalytic residue. The Lumenal segment spans residues 399–430 (KKSVMITVARGSDEGPSLPMVLKMPKEFDTWN). Residues 431-451 (GYDMIGFGDILFPGLLVAFSF) form a helical membrane-spanning segment. Residue D439 is part of the active site. At 452-465 (RYDRANGKDLTDGY) the chain is on the cytoplasmic side. The helical transmembrane segment at 466–486 (FLCLMIGYAFGLSCTYVGLYL) threads the bilayer. The Lumenal portion of the chain corresponds to 487-489 (MKS). A helical transmembrane segment spans residues 490 to 510 (GQPALLYLVPSTLGTIVTLGA). The short motif at 492 to 494 (PAL) is the PAL element. The Cytoplasmic segment spans residues 511–523 (KRGELSQLWNAKV).

It belongs to the peptidase A22B family. In terms of processing, glycosylated.

It localises to the endosome membrane. Its function is as follows. Intramembrane-cleaving aspartic protease (I-CLiP) that cleaves type II membrane signal peptides in the hydrophobic plane of the membrane. The chain is Signal peptide peptidase-like 3 (SPPL3) from Oryza sativa subsp. japonica (Rice).